A 158-amino-acid chain; its full sequence is Ribosome-binding factor A (158 aa).

Positions Ala-114–Ala-158 are disordered. A compositionally biased stretch (basic and acidic residues) spans Ser-148–Ala-158.

Belongs to the RbfA family. Monomer. Binds 30S ribosomal subunits, but not 50S ribosomal subunits or 70S ribosomes.

Its subcellular location is the cytoplasm. One of several proteins that assist in the late maturation steps of the functional core of the 30S ribosomal subunit. Associates with free 30S ribosomal subunits (but not with 30S subunits that are part of 70S ribosomes or polysomes). Required for efficient processing of 16S rRNA. May interact with the 5'-terminal helix region of 16S rRNA. This chain is Ribosome-binding factor A, found in Streptomyces griseus subsp. griseus (strain JCM 4626 / CBS 651.72 / NBRC 13350 / KCC S-0626 / ISP 5235).